Reading from the N-terminus, the 778-residue chain is NAD-dependent deacetylase sir2B (778 aa).

9 ANK repeats span residues 83–112 (LNWTPLHVAVSNKSIEVVTLLLERNIEISI), 114–142 (RYTAFHIAACNGDLNIIEKMITMNRVPNG), 148–178 (DMETSLFLSITNNHFEISEKIMDYYQSSMNS), 191–221 (HGVSPLIMSVLRKNLKMIKKLIEEGDADINS), 225–255 (DNSTSLHCAAIIDFTEAIEYLLDIGGIELMN), 260–289 (YGNSPIHEAAIKGNFKSIQTFINQLKKIII), 317–354 (DGSTPLHLCCNCVNSDNIENNLKSCKVLIEEGGVQVNG), 358–390 (GNATALHILACVGEDKSLPLVKYFLSIGSDPTI), and 394–423 (YGWTPIHQAYNNKNIQIYQLLLDHLKLTNS). The tract at residues 438–458 (SSTSTSSSSSSSSSSSSSSSS) is disordered. A Deacetylase sirtuin-type domain is found at 465–778 (KEELKLKGIE…DYFNTLFNSF (314 aa)). Catalysis depends on His-608, which acts as the Proton acceptor. Zn(2+) is bound by residues Cys-616, Cys-619, Cys-642, and Cys-647. The segment at 727–746 (KLKQQQENESGESSNDNDNN) is disordered. The span at 733–746 (ENESGESSNDNDNN) shows a compositional bias: low complexity.

Belongs to the sirtuin family. Zn(2+) serves as cofactor.

The enzyme catalyses N(6)-acetyl-L-lysyl-[protein] + NAD(+) + H2O = 2''-O-acetyl-ADP-D-ribose + nicotinamide + L-lysyl-[protein]. Its function is as follows. NAD-dependent deacetylase, which plays an important role in the regulation of transcriptional repression. This is NAD-dependent deacetylase sir2B (sir2B) from Dictyostelium discoideum (Social amoeba).